A 345-amino-acid chain; its full sequence is Ferrochelatase (345 aa).

The Fe cation site is built by H215 and E296.

This sequence belongs to the ferrochelatase family.

The protein localises to the cytoplasm. It carries out the reaction heme b + 2 H(+) = protoporphyrin IX + Fe(2+). Its pathway is porphyrin-containing compound metabolism; protoheme biosynthesis; protoheme from protoporphyrin-IX: step 1/1. Functionally, catalyzes the ferrous insertion into protoporphyrin IX. The chain is Ferrochelatase from Rhodopseudomonas palustris (strain TIE-1).